Consider the following 626-residue polypeptide: Transketolase-like protein 2 (626 aa).

Residues S41, H78, and 124–126 (GSL) contribute to the thiamine diphosphate site. D156 lines the Mg(2+) pocket. G157 and N186 together coordinate thiamine diphosphate. Mg(2+) contacts are provided by N186 and L188. K248 and H262 together coordinate thiamine diphosphate. Positions 262 and 349 each coordinate substrate. Residues E370 and F396 each coordinate thiamine diphosphate. The active-site Proton donor is the E370. 2 residues coordinate substrate: H420 and D428. A thiamine diphosphate-binding site is contributed by Q432.

It belongs to the transketolase family. Homodimer. Mg(2+) serves as cofactor. Requires Ca(2+) as cofactor. The cofactor is Mn(2+). Co(2+) is required as a cofactor. It depends on thiamine diphosphate as a cofactor. In terms of tissue distribution, overexpressed in hepatoma cancer cells.

The enzyme catalyses D-sedoheptulose 7-phosphate + D-glyceraldehyde 3-phosphate = aldehydo-D-ribose 5-phosphate + D-xylulose 5-phosphate. Plays an essential role in total transketolase activity and cell proliferation in cancer cells; after transfection with anti-TKTL1 siRNA, total transketolase activity dramatically decreases and proliferation was significantly inhibited in cancer cells. Plays a pivotal role in carcinogenesis. This Homo sapiens (Human) protein is Transketolase-like protein 2 (TKTL2).